Reading from the N-terminus, the 504-residue chain is Maturase K (504 aa).

It belongs to the intron maturase 2 family. MatK subfamily.

It localises to the plastid. It is found in the chloroplast. Usually encoded in the trnK tRNA gene intron. Probably assists in splicing its own and other chloroplast group II introns. The sequence is that of Maturase K from Lablab purpureus (Hyacinth bean).